Here is a 474-residue protein sequence, read N- to C-terminus: Glutamate--tRNA ligase (474 aa).

The 'HIGH' region signature appears at 9–19 (PSPTGYLHVGG). The short motif at 240-244 (KLSKR) is the 'KMSKS' region element. Residue Lys243 coordinates ATP.

Belongs to the class-I aminoacyl-tRNA synthetase family. Glutamate--tRNA ligase type 1 subfamily. Monomer.

The protein localises to the cytoplasm. It carries out the reaction tRNA(Glu) + L-glutamate + ATP = L-glutamyl-tRNA(Glu) + AMP + diphosphate. Catalyzes the attachment of glutamate to tRNA(Glu) in a two-step reaction: glutamate is first activated by ATP to form Glu-AMP and then transferred to the acceptor end of tRNA(Glu). This Aliivibrio salmonicida (strain LFI1238) (Vibrio salmonicida (strain LFI1238)) protein is Glutamate--tRNA ligase.